The chain runs to 157 residues: Protein Smg (157 aa).

The protein belongs to the Smg family.

The polypeptide is Protein Smg (Yersinia pestis (strain Pestoides F)).